A 446-amino-acid chain; its full sequence is Neuropeptide Y receptor type 5 (446 aa).

The Extracellular segment spans residues 1 to 42 (MGSEIPDYYNKTLASENNTVATRNSGFPVWEDYKGSVDDLQY). Asn10 and Asn17 each carry an N-linked (GlcNAc...) asparagine glycan. The helical transmembrane segment at 43 to 63 (FLIGLYTFVSLLGFMGNLLIL) threads the bilayer. Residues 64-77 (MAVMRKRNQKTTVN) are Cytoplasmic-facing. The helical transmembrane segment at 78-98 (FLIGNLAFSDILVVLFCSPFT) threads the bilayer. The Extracellular portion of the chain corresponds to 99–117 (LTSVLLDQWMFGKVMCHIM). A disulfide bridge links Cys114 with Cys198. A helical transmembrane segment spans residues 118 to 138 (PFLQCVTVLVSTLILISIAIV). Topologically, residues 139-156 (RYHMIKHPVSNNLTANHG) are cytoplasmic. Residues 157–177 (YFLIATVWTLGLAICSPLPVF) traverse the membrane as a helical segment. Residues 178–208 (HSLVELQESFGSAWLSSRYLCVESWPSDSYR) are Extracellular-facing. A helical membrane pass occupies residues 209-229 (IAFTISLLLVQYILPLVCLTV). Over 230–369 (SHTSVCRTIS…RKRSRSVFYR (140 aa)) the chain is Cytoplasmic. Positions 297–325 (RPAPAGPALESREGRPPGKVGSMQSQPPP) are disordered. The chain crosses the membrane as a helical span at residues 370–390 (LTVLILVFAVSWMPLHLFHVV). Over 391–407 (TDFNDNLISNRHFKLVY) the chain is Extracellular. The chain crosses the membrane as a helical span at residues 408–428 (CICHLLGMMSCCLNPILYGFL). Topologically, residues 429–446 (NNGIKADLMSLIHCLHVS) are cytoplasmic. Cys442 carries the S-palmitoyl cysteine lipid modification.

This sequence belongs to the G-protein coupled receptor 1 family.

The protein resides in the cell membrane. Functionally, receptor for neuropeptide Y and peptide YY. The activity of this receptor is mediated by G proteins that inhibit adenylate cyclase activity. Seems to be associated with food intake. Could be involved in feeding disorders. This Sus scrofa (Pig) protein is Neuropeptide Y receptor type 5 (NPY5R).